A 339-amino-acid chain; its full sequence is uncharacterized protein (339 aa).

The disordered stretch occupies residues 1-24; sequence IQPARRHTKNTNMAKHTTKGTGHS. Positions 10-21 are enriched in polar residues; it reads NTNMAKHTTKGT.

It localises to the mitochondrion. This is an uncharacterized protein from Zea mays (Maize).